The primary structure comprises 114 residues: MEMVSKIACFVLLCMVVVAPHAEALTCGQVTAGLAPCLPYLQGRGPLGGCCGGVKNLLGSAKTTADRKTACTCLKSAANAIKGIDLNKAAGIPSVCKVNIPYKISPSTDCSTVQ.

The first 23 residues, 1–23 (MEMVSKIACFVLLCMVVVAPHAE), serve as a signal peptide directing secretion. 4 cysteine pairs are disulfide-bonded: Cys-27/Cys-73, Cys-37/Cys-50, Cys-51/Cys-96, and Cys-71/Cys-110.

The protein belongs to the plant LTP family.

Plant non-specific lipid-transfer proteins transfer phospholipids as well as galactolipids across membranes. May play a role in wax or cutin deposition in the cell walls of expanding epidermal cells and certain secretory tissues. This chain is Non-specific lipid-transfer protein 1 (TSW12), found in Solanum lycopersicum (Tomato).